A 360-amino-acid chain; its full sequence is Mitogen-activated protein kinase 1 (360 aa).

Ala2 is subject to N-acetylalanine. In terms of domain architecture, Protein kinase spans 25–313 (YTNLSYIGEG…VEQALAHPYL (289 aa)). Ser29 bears the Phosphoserine; by SGK1 mark. Residues 31–39 (IGEGAYGMV) and Lys54 each bind ATP. The active-site Proton acceptor is Asp149. Thr185 carries the post-translational modification Phosphothreonine; by MAP2K1 and MAP2K2. Residues 185–187 (TEY) carry the TXY motif. The residue at position 187 (Tyr187) is a Phosphotyrosine; by MAP2K1 and MAP2K2. Thr190 carries the post-translational modification Phosphothreonine; by autocatalysis. 3 positions are modified to phosphoserine: Ser246, Ser248, and Ser284.

This sequence belongs to the protein kinase superfamily. CMGC Ser/Thr protein kinase family. MAP kinase subfamily. As to quaternary structure, binds both upstream activators and downstream substrates in multimolecular complexes. Interacts with ADAM15, ARHGEF2, ARRB2, DAPK1 (via death domain), HSF4, IER3, IPO7, MKNK2, MORG1, NISCH, PEA15, SGK1, and isoform 1 of NEK2. Interacts (via phosphorylated form) with TPR (via C-terminal region and phosphorylated form); the interaction requires dimerization of MAPK1/ERK2 and increases following EGF stimulation. Interacts with MAP2K1. Interacts with DUSP6. Interacts (phosphorylated form) with CAV2 ('Tyr-19'-phosphorylated form); the interaction, promoted by insulin, leads to nuclear location and MAPK1 activation. MKNK2 isoform 1 binding prevents from dephosphorylation and inactivation. Interacts with DCC. The phosphorylated form interacts with PML. Interacts with STYX. Interacts with CDK2AP2. Interacts with CAVIN4. Interacts with DUSP7; the interaction enhances DUSP7 phosphatase activity. Interacts with GIT1; this interaction is necessary for MAPK1 localization to focal adhesions. Interacts with ZNF263. Interacts with phosphoglycerate kinase PGK1; the interaction is direct, occurs under hypoxic conditions, and promotes interaction between PGK1 and PIN1. The cofactor is Mg(2+). Post-translationally, dually phosphorylated on Thr-185 and Tyr-187, which activates the enzyme. Phosphorylated upon FLT3 and KIT signaling. Phosphorylation on Ser-29 by SGK1 results in its activation by enhancing its interaction with MAP2K1/MEK1 and MAP2K2/MEK2. Phosphorylation at Ser-246 and Ser-248 as well as autophosphorylation at Thr-190 promote nuclear localization. Ligand-activated ALK induces tyrosine phosphorylation. Dephosphorylated by PTPRJ at Tyr-187. Dephosphorylated by DUSP1 and DUSP2 at Thr-185 and Tyr-187. In terms of processing, ISGylated. Ubiquitinated by TRIM15 via 'Lys-63'-linked ubiquitination; leading to activation. Deubiquitinated by CYLD.

Its subcellular location is the nucleus. It localises to the cytoplasm. It is found in the cytoskeleton. The protein resides in the microtubule organizing center. The protein localises to the centrosome. Its subcellular location is the spindle. It localises to the membrane. It is found in the caveola. The protein resides in the cell junction. The protein localises to the focal adhesion. It carries out the reaction L-seryl-[protein] + ATP = O-phospho-L-seryl-[protein] + ADP + H(+). The catalysed reaction is L-threonyl-[protein] + ATP = O-phospho-L-threonyl-[protein] + ADP + H(+). Phosphorylated by MAP2K1/MEK1 and MAP2K2/MEK2 on Thr-185 and Tyr-187 in response to external stimuli like insulin or NGF. Both phosphorylations are required for activity. This phosphorylation causes dramatic conformational changes, which enable full activation and interaction of MAPK1/ERK2 with its substrates. Phosphorylation on Ser-29 by SGK1 results in its activation by enhancing its interaction with MAP2K1/MEK1 and MAP2K2/MEK2. Dephosphorylated and inactivated by DUSP1, DUSP3, DUSP6 and DUSP9. Inactivated by pyrimidylpyrrole inhibitors. Its function is as follows. Serine/threonine kinase which acts as an essential component of the MAP kinase signal transduction pathway. MAPK1/ERK2 and MAPK3/ERK1 are the 2 MAPKs which play an important role in the MAPK/ERK cascade. They participate also in a signaling cascade initiated by activated KIT and KITLG/SCF. Depending on the cellular context, the MAPK/ERK cascade mediates diverse biological functions such as cell growth, adhesion, survival and differentiation through the regulation of transcription, translation, cytoskeletal rearrangements. The MAPK/ERK cascade also plays a role in initiation and regulation of meiosis, mitosis, and postmitotic functions in differentiated cells by phosphorylating a number of transcription factors. About 160 substrates have already been discovered for ERKs. Many of these substrates are localized in the nucleus, and seem to participate in the regulation of transcription upon stimulation. However, other substrates are found in the cytosol as well as in other cellular organelles, and those are responsible for processes such as translation, mitosis and apoptosis. Moreover, the MAPK/ERK cascade is also involved in the regulation of the endosomal dynamics, including lysosome processing and endosome cycling through the perinuclear recycling compartment (PNRC); as well as in the fragmentation of the Golgi apparatus during mitosis. The substrates include transcription factors (such as ATF2, BCL6, ELK1, ERF, FOS, HSF4 or SPZ1), cytoskeletal elements (such as CANX, CTTN, GJA1, MAP2, MAPT, PXN, SORBS3 or STMN1), regulators of apoptosis (such as BAD, BTG2, CASP9, DAPK1, IER3, MCL1 or PPARG), regulators of translation (such as EIF4EBP1 and FXR1) and a variety of other signaling-related molecules (like ARHGEF2, DCC, FRS2 or GRB10). Protein kinases (such as RAF1, RPS6KA1/RSK1, RPS6KA3/RSK2, RPS6KA2/RSK3, RPS6KA6/RSK4, SYK, MKNK1/MNK1, MKNK2/MNK2, RPS6KA5/MSK1, RPS6KA4/MSK2, MAPKAPK3 or MAPKAPK5) and phosphatases (such as DUSP1, DUSP4, DUSP6 or DUSP16) are other substrates which enable the propagation the MAPK/ERK signal to additional cytosolic and nuclear targets, thereby extending the specificity of the cascade. Mediates phosphorylation of TPR in response to EGF stimulation. May play a role in the spindle assembly checkpoint. Phosphorylates PML and promotes its interaction with PIN1, leading to PML degradation. Phosphorylates CDK2AP2. Phosphorylates phosphoglycerate kinase PGK1 under hypoxic conditions to promote its targeting to the mitochondrion and suppress the formation of acetyl-coenzyme A from pyruvate. Acts as a transcriptional repressor. Binds to a [GC]AAA[GC] consensus sequence. Repress the expression of interferon gamma-induced genes. Seems to bind to the promoter of CCL5, DMP1, IFIH1, IFITM1, IRF7, IRF9, LAMP3, OAS1, OAS2, OAS3 and STAT1. Transcriptional activity is independent of kinase activity. The protein is Mitogen-activated protein kinase 1 of Bos taurus (Bovine).